A 230-amino-acid polypeptide reads, in one-letter code: Leucyl/phenylalanyl-tRNA--protein transferase (230 aa).

It belongs to the L/F-transferase family.

It localises to the cytoplasm. It catalyses the reaction N-terminal L-lysyl-[protein] + L-leucyl-tRNA(Leu) = N-terminal L-leucyl-L-lysyl-[protein] + tRNA(Leu) + H(+). The catalysed reaction is N-terminal L-arginyl-[protein] + L-leucyl-tRNA(Leu) = N-terminal L-leucyl-L-arginyl-[protein] + tRNA(Leu) + H(+). It carries out the reaction L-phenylalanyl-tRNA(Phe) + an N-terminal L-alpha-aminoacyl-[protein] = an N-terminal L-phenylalanyl-L-alpha-aminoacyl-[protein] + tRNA(Phe). In terms of biological role, functions in the N-end rule pathway of protein degradation where it conjugates Leu, Phe and, less efficiently, Met from aminoacyl-tRNAs to the N-termini of proteins containing an N-terminal arginine or lysine. The protein is Leucyl/phenylalanyl-tRNA--protein transferase of Hamiltonella defensa subsp. Acyrthosiphon pisum (strain 5AT).